The sequence spans 945 residues: Isoleucine--tRNA ligase (945 aa).

Residues 66–76 carry the 'HIGH' region motif; sequence PYANGDIHLGH. Glu581 contacts L-isoleucyl-5'-AMP. Positions 622–626 match the 'KMSKS' region motif; the sequence is KMSKS. Lys625 is a binding site for ATP. Residues Cys908, Cys911, Cys928, and Cys931 each contribute to the Zn(2+) site.

The protein belongs to the class-I aminoacyl-tRNA synthetase family. IleS type 1 subfamily. Monomer. Zn(2+) serves as cofactor.

Its subcellular location is the cytoplasm. It carries out the reaction tRNA(Ile) + L-isoleucine + ATP = L-isoleucyl-tRNA(Ile) + AMP + diphosphate. Functionally, catalyzes the attachment of isoleucine to tRNA(Ile). As IleRS can inadvertently accommodate and process structurally similar amino acids such as valine, to avoid such errors it has two additional distinct tRNA(Ile)-dependent editing activities. One activity is designated as 'pretransfer' editing and involves the hydrolysis of activated Val-AMP. The other activity is designated 'posttransfer' editing and involves deacylation of mischarged Val-tRNA(Ile). In Burkholderia cenocepacia (strain HI2424), this protein is Isoleucine--tRNA ligase.